A 377-amino-acid polypeptide reads, in one-letter code: Chaperone protein DnaJ (377 aa).

Positions 5-70 (DFYETLGVSK…QKRAAYDRFG (66 aa)) constitute a J domain. The CR-type zinc-finger motif lies at 138 to 216 (GKTAQIRVPT…CHGQGRVTEE (79 aa)). Positions 151, 154, 168, 171, 190, 193, 204, and 207 each coordinate Zn(2+). 4 CXXCXGXG motif repeats span residues 151 to 158 (CDVCSGSG), 168 to 175 (CATCQGSG), 190 to 197 (CPTCHGRG), and 204 to 211 (CGKCHGQG).

The protein belongs to the DnaJ family. In terms of assembly, homodimer. It depends on Zn(2+) as a cofactor.

Its subcellular location is the cytoplasm. Participates actively in the response to hyperosmotic and heat shock by preventing the aggregation of stress-denatured proteins and by disaggregating proteins, also in an autonomous, DnaK-independent fashion. Unfolded proteins bind initially to DnaJ; upon interaction with the DnaJ-bound protein, DnaK hydrolyzes its bound ATP, resulting in the formation of a stable complex. GrpE releases ADP from DnaK; ATP binding to DnaK triggers the release of the substrate protein, thus completing the reaction cycle. Several rounds of ATP-dependent interactions between DnaJ, DnaK and GrpE are required for fully efficient folding. Also involved, together with DnaK and GrpE, in the DNA replication of plasmids through activation of initiation proteins. The polypeptide is Chaperone protein DnaJ (Agrobacterium fabrum (strain C58 / ATCC 33970) (Agrobacterium tumefaciens (strain C58))).